We begin with the raw amino-acid sequence, 163 residues long: Staphylokinase (163 aa).

An N-terminal signal peptide occupies residues 1-27 (MLKRGLLFLTVLLLLFSFSSITNEVSA).

This sequence belongs to the staphylokinase family.

Its subcellular location is the secreted. In terms of biological role, potent plasminogen activator that converts plasminogen into plasmin. It forms a 1:1 complex with plasmin, which in turn activates other plasminogen molecules. This is Staphylokinase (sak) from Staphylococcus aureus (strain MRSA252).